A 71-amino-acid chain; its full sequence is Conotoxin LvVIIB (71 aa).

An N-terminal signal peptide occupies residues Val-1–Ala-17. A propeptide spanning residues Asp-18–Arg-42 is cleaved from the precursor. 3 cysteine pairs are disulfide-bonded: Cys-43–Cys-57, Cys-50–Cys-62, and Cys-56–Cys-69.

This sequence belongs to the conotoxin O1 superfamily. Expressed by the venom duct.

Its subcellular location is the secreted. The protein is Conotoxin LvVIIB of Conus lividus (Livid cone).